Reading from the N-terminus, the 508-residue chain is Photosystem II CP47 reaction center protein (508 aa).

The next 6 helical transmembrane spans lie at 21-36 (AVHLMHTALVSGWAGS), 101-115 (ITLSGLLFLSAIWHW), 140-156 (GIHLFLSGVLCFGFGAF), 203-218 (IAAGILGILAGLFHLS), 237-252 (VLSSSIAAVFFAAFVV), and 457-472 (TFALIFFFGHIWHGAR).

It belongs to the PsbB/PsbC family. PsbB subfamily. As to quaternary structure, PSII is composed of 1 copy each of membrane proteins PsbA, PsbB, PsbC, PsbD, PsbE, PsbF, PsbH, PsbI, PsbJ, PsbK, PsbL, PsbM, PsbT, PsbX, PsbY, PsbZ, Psb30/Ycf12, at least 3 peripheral proteins of the oxygen-evolving complex and a large number of cofactors. It forms dimeric complexes. Binds multiple chlorophylls. PSII binds additional chlorophylls, carotenoids and specific lipids. serves as cofactor.

The protein resides in the plastid. Its subcellular location is the chloroplast thylakoid membrane. Its function is as follows. One of the components of the core complex of photosystem II (PSII). It binds chlorophyll and helps catalyze the primary light-induced photochemical processes of PSII. PSII is a light-driven water:plastoquinone oxidoreductase, using light energy to abstract electrons from H(2)O, generating O(2) and a proton gradient subsequently used for ATP formation. The protein is Photosystem II CP47 reaction center protein of Psilotum nudum (Whisk fern).